We begin with the raw amino-acid sequence, 490 residues long: Aspartyl/glutamyl-tRNA(Asn/Gln) amidotransferase subunit B (490 aa).

Belongs to the GatB/GatE family. GatB subfamily. As to quaternary structure, heterotrimer of A, B and C subunits.

It carries out the reaction L-glutamyl-tRNA(Gln) + L-glutamine + ATP + H2O = L-glutaminyl-tRNA(Gln) + L-glutamate + ADP + phosphate + H(+). The enzyme catalyses L-aspartyl-tRNA(Asn) + L-glutamine + ATP + H2O = L-asparaginyl-tRNA(Asn) + L-glutamate + ADP + phosphate + 2 H(+). Functionally, allows the formation of correctly charged Asn-tRNA(Asn) or Gln-tRNA(Gln) through the transamidation of misacylated Asp-tRNA(Asn) or Glu-tRNA(Gln) in organisms which lack either or both of asparaginyl-tRNA or glutaminyl-tRNA synthetases. The reaction takes place in the presence of glutamine and ATP through an activated phospho-Asp-tRNA(Asn) or phospho-Glu-tRNA(Gln). This Symbiobacterium thermophilum (strain DSM 24528 / JCM 14929 / IAM 14863 / T) protein is Aspartyl/glutamyl-tRNA(Asn/Gln) amidotransferase subunit B.